Reading from the N-terminus, the 177-residue chain is MSRVAKTPVAIPAGVDVSIKDDQINVKGTGGALSQAQNALVKISNNEGKLSFEPVNDSREANAMSGTMRQLVNNMVVGVSKGFEKKLSLVGVGFKASASGSKLNLAIGFSHPVNFEMPAGITVTTPTPTEILVKGADRQAVGQMAAEIRAVRPPEPYKGKGIRYSDEKVVIKETKKK.

It belongs to the universal ribosomal protein uL6 family. As to quaternary structure, part of the 50S ribosomal subunit.

Functionally, this protein binds to the 23S rRNA, and is important in its secondary structure. It is located near the subunit interface in the base of the L7/L12 stalk, and near the tRNA binding site of the peptidyltransferase center. This chain is Large ribosomal subunit protein uL6, found in Delftia acidovorans (strain DSM 14801 / SPH-1).